Consider the following 138-residue polypeptide: Cysteine desulfuration protein SufE (138 aa).

The active-site Cysteine persulfide intermediate is cysteine 51.

The protein belongs to the SufE family. As to quaternary structure, homodimer. Interacts with SufS.

It localises to the cytoplasm. It participates in cofactor biosynthesis; iron-sulfur cluster biosynthesis. In terms of biological role, participates in cysteine desulfuration mediated by SufS. Cysteine desulfuration mobilizes sulfur from L-cysteine to yield L-alanine and constitutes an essential step in sulfur metabolism for biosynthesis of a variety of sulfur-containing biomolecules. Functions as a sulfur acceptor for SufS, by mediating the direct transfer of the sulfur atom from the S-sulfanylcysteine of SufS, an intermediate product of cysteine desulfuration process. This is Cysteine desulfuration protein SufE from Salmonella arizonae (strain ATCC BAA-731 / CDC346-86 / RSK2980).